The following is a 399-amino-acid chain: [Pyruvate dehydrogenase (acetyl-transferring)] kinase, mitochondrial (399 aa).

Residues 1–18 constitute a mitochondrion transit peptide; the sequence is MFLTRRLLGPFTSAIARK. The Histidine kinase domain maps to 123–360; sequence VVETMAEGLI…DAMIFLKAIP (238 aa). ATP-binding positions include 247-254, aspartate 286, 305-306, and 321-326; these read ELFKNSMR, ST, and GYGYGL.

The protein belongs to the PDK/BCKDK protein kinase family.

It is found in the mitochondrion matrix. It catalyses the reaction L-seryl-[pyruvate dehydrogenase E1 alpha subunit] + ATP = O-phospho-L-seryl-[pyruvate dehydrogenase E1 alpha subunit] + ADP + H(+). In terms of biological role, inhibits the mitochondrial pyruvate dehydrogenase complex by phosphorylation of the E1 alpha subunit, thus contributing to the regulation of glucose metabolism. This chain is [Pyruvate dehydrogenase (acetyl-transferring)] kinase, mitochondrial, found in Ascaris suum (Pig roundworm).